Here is a 707-residue protein sequence, read N- to C-terminus: Protein kinase C theta type (707 aa).

A C2 domain is found at 1–107 (MSPFLRIGLS…KNNGRTEIWL (107 aa)). Y90 carries the phosphotyrosine; by LCK modification. The Phorbol-ester/DAG-type 1 zinc finger occupies 159-209 (CHEFTATFFPQPTFCSVCHEFVWGLNKQGYQCRRCNAAIHKKCIDKVIAKC). T219 is subject to Phosphothreonine; by autocatalysis. The Phorbol-ester/DAG-type 2 zinc finger occupies 231 to 281 (PHRFKVYNYKSPTFCEHCGTLLWGLARQGLKCDACGMNVHHRCQTKVANLC). S348 bears the Phosphoserine mark. Positions 380-634 (FILHKMLGKG…RGDIRQHPLF (255 aa)) constitute a Protein kinase domain. ATP contacts are provided by residues 386–394 (LGKGSFGKV) and K409. Catalysis depends on D504, which acts as the Proton acceptor. Position 538 is a phosphothreonine; by PDPK1 (T538). Residues 635–706 (REINWEELER…INPGMETLIC (72 aa)) enclose the AGC-kinase C-terminal domain. Phosphoserine occurs at positions 676 and 685. At S695 the chain carries Phosphoserine; by autocatalysis.

Belongs to the protein kinase superfamily. AGC Ser/Thr protein kinase family. PKC subfamily. In terms of assembly, part of a membrane raft complex composed at least of BCL10, CARD11, MALT1 and IKBKB. Interacts with GLRX3 (via N-terminus). Interacts with ECT2. Interacts with CCDC88A/GIV; the interaction leads to phosphorylation of CCDC88A and inhibition of its guanine nucleotide exchange factor activity. Interacts with CD28. Mg(2+) serves as cofactor. Post-translationally, autophosphorylation at Thr-219 is required for targeting to the TCR and cellular function of PRKCQ upon antigen receptor ligation. Following TCR stimulation, phosphorylated at Tyr-90 and Ser-685.

The protein resides in the cytoplasm. It is found in the cell membrane. The enzyme catalyses L-seryl-[protein] + ATP = O-phospho-L-seryl-[protein] + ADP + H(+). It catalyses the reaction L-threonyl-[protein] + ATP = O-phospho-L-threonyl-[protein] + ADP + H(+). With respect to regulation, novel PKCs (PRKCD, PRKCE, PRKCH and PRKCQ) are calcium-insensitive, but activated by diacylglycerol (DAG) and phosphatidylserine. Three specific sites; Thr-538 (activation loop of the kinase domain), Ser-676 (turn motif) and Ser-695 (hydrophobic region), need to be phosphorylated for its full activation. Calcium-independent, phospholipid- and diacylglycerol (DAG)-dependent serine/threonine-protein kinase that mediates non-redundant functions in T-cell receptor (TCR) signaling, including T-cells activation, proliferation, differentiation and survival, by mediating activation of multiple transcription factors such as NF-kappa-B, JUN, NFATC1 and NFATC2. In TCR-CD3/CD28-co-stimulated T-cells, is required for the activation of NF-kappa-B and JUN, which in turn are essential for IL2 production, and participates in the calcium-dependent NFATC1 and NFATC2 transactivation. Mediates the activation of the canonical NF-kappa-B pathway (NFKB1) by direct phosphorylation of CARD11 on several serine residues, inducing CARD11 association with lipid rafts and recruitment of the BCL10-MALT1 complex, which then activates IKK complex, resulting in nuclear translocation and activation of NFKB1. May also play an indirect role in activation of the non-canonical NF-kappa-B (NFKB2) pathway. In the signaling pathway leading to JUN activation, acts by phosphorylating the mediator STK39/SPAK and may not act through MAP kinases signaling. Plays a critical role in TCR/CD28-induced NFATC1 and NFATC2 transactivation by participating in the regulation of reduced inositol 1,4,5-trisphosphate generation and intracellular calcium mobilization. After costimulation of T-cells through CD28 can phosphorylate CBLB and is required for the ubiquitination and subsequent degradation of CBLB, which is a prerequisite for the activation of TCR. During T-cells differentiation, plays an important role in the development of T-helper 2 (Th2) cells following immune and inflammatory responses, and, in the development of inflammatory autoimmune diseases, is necessary for the activation of IL17-producing Th17 cells. May play a minor role in Th1 response. Upon TCR stimulation, mediates T-cell protective survival signal by phosphorylating BAD, thus protecting T-cells from BAD-induced apoptosis, and by up-regulating BCL-X(L)/BCL2L1 levels through NF-kappa-B and JUN pathways. In platelets, regulates signal transduction downstream of the ITGA2B, CD36/GP4, F2R/PAR1 and F2RL3/PAR4 receptors, playing a positive role in 'outside-in' signaling and granule secretion signal transduction. May relay signals from the activated ITGA2B receptor by regulating the uncoupling of WASP and WIPF1, thereby permitting the regulation of actin filament nucleation and branching activity of the Arp2/3 complex. May mediate inhibitory effects of free fatty acids on insulin signaling by phosphorylating IRS1, which in turn blocks IRS1 tyrosine phosphorylation and downstream activation of the PI3K/AKT pathway. Phosphorylates MSN (moesin) in the presence of phosphatidylglycerol or phosphatidylinositol. Phosphorylates PDPK1 at 'Ser-504' and 'Ser-532' and negatively regulates its ability to phosphorylate PKB/AKT1. Phosphorylates CCDC88A/GIV and inhibits its guanine nucleotide exchange factor activity. Phosphorylates and activates LRRK1, which phosphorylates RAB proteins involved in intracellular trafficking. The sequence is that of Protein kinase C theta type (Prkcq) from Rattus norvegicus (Rat).